The following is a 274-amino-acid chain: 4-hydroxy-3-methylbut-2-enyl diphosphate reductase (274 aa).

C12 serves as a coordination point for [4Fe-4S] cluster. 2 residues coordinate (2E)-4-hydroxy-3-methylbut-2-enyl diphosphate: H36 and H70. Positions 36 and 70 each coordinate dimethylallyl diphosphate. Positions 36 and 70 each coordinate isopentenyl diphosphate. Residue C92 participates in [4Fe-4S] cluster binding. Position 120 (H120) interacts with (2E)-4-hydroxy-3-methylbut-2-enyl diphosphate. Dimethylallyl diphosphate is bound at residue H120. An isopentenyl diphosphate-binding site is contributed by H120. E122 acts as the Proton donor in catalysis. T158 is a binding site for (2E)-4-hydroxy-3-methylbut-2-enyl diphosphate. C186 is a binding site for [4Fe-4S] cluster. Residues S214, S215, N216, and S258 each coordinate (2E)-4-hydroxy-3-methylbut-2-enyl diphosphate. Positions 214, 215, 216, and 258 each coordinate dimethylallyl diphosphate. S214, S215, N216, and S258 together coordinate isopentenyl diphosphate.

Belongs to the IspH family. [4Fe-4S] cluster is required as a cofactor.

It carries out the reaction isopentenyl diphosphate + 2 oxidized [2Fe-2S]-[ferredoxin] + H2O = (2E)-4-hydroxy-3-methylbut-2-enyl diphosphate + 2 reduced [2Fe-2S]-[ferredoxin] + 2 H(+). The catalysed reaction is dimethylallyl diphosphate + 2 oxidized [2Fe-2S]-[ferredoxin] + H2O = (2E)-4-hydroxy-3-methylbut-2-enyl diphosphate + 2 reduced [2Fe-2S]-[ferredoxin] + 2 H(+). It functions in the pathway isoprenoid biosynthesis; dimethylallyl diphosphate biosynthesis; dimethylallyl diphosphate from (2E)-4-hydroxy-3-methylbutenyl diphosphate: step 1/1. The protein operates within isoprenoid biosynthesis; isopentenyl diphosphate biosynthesis via DXP pathway; isopentenyl diphosphate from 1-deoxy-D-xylulose 5-phosphate: step 6/6. In terms of biological role, catalyzes the conversion of 1-hydroxy-2-methyl-2-(E)-butenyl 4-diphosphate (HMBPP) into a mixture of isopentenyl diphosphate (IPP) and dimethylallyl diphosphate (DMAPP). Acts in the terminal step of the DOXP/MEP pathway for isoprenoid precursor biosynthesis. The polypeptide is 4-hydroxy-3-methylbut-2-enyl diphosphate reductase (Campylobacter curvus (strain 525.92)).